The sequence spans 106 residues: Large ribosomal subunit protein bL21 (106 aa).

It belongs to the bacterial ribosomal protein bL21 family. In terms of assembly, part of the 50S ribosomal subunit. Contacts protein L20.

Functionally, this protein binds to 23S rRNA in the presence of protein L20. This chain is Large ribosomal subunit protein bL21, found in Xanthomonas euvesicatoria pv. vesicatoria (strain 85-10) (Xanthomonas campestris pv. vesicatoria).